The primary structure comprises 279 residues: Fatty acid elongase 2 (279 aa).

The next 7 membrane-spanning stretches (helical) occupy residues 16–36, 61–81, 112–132, 138–158, 164–184, 196–216, and 242–262; these read LMLE…ALVW, AIIV…IVVV, FWIG…MFLL, PPFL…HTYC, MVLF…YFAM, FAPF…LVTT, and MGVI…LNSY. Positions 142–146 match the HxxHH motif motif; that stretch reads HWYHH. The active-site Nucleophile is His-145.

This sequence belongs to the ELO family.

The protein localises to the endoplasmic reticulum membrane. The enzyme catalyses an acyl-CoA + malonyl-CoA + H(+) = a 3-oxoacyl-CoA + CO2 + CoA. It functions in the pathway lipid metabolism; fatty acid biosynthesis. Involved in the synthesis of fatty acids. Elongates C10 fatty acids to C14. Required for the maintenance of the global lipidome profile in this parasite. This is Fatty acid elongase 2 from Trypanosoma cruzi (strain CL Brener).